Reading from the N-terminus, the 79-residue chain is MVKIVIHEERCHGCGNCVIACPVNACNSPNVWGGKGPEDGEDVVIKVVNGTVSVINEDLCEACMTCELACPVDAIEIKT.

2 4Fe-4S ferredoxin-type domains span residues 2–31 (VKIV…SPNV) and 51–79 (TVSV…EIKT). Residues Cys11, Cys14, Cys17, Cys21, Cys60, Cys63, Cys66, and Cys70 each coordinate [4Fe-4S] cluster.

It depends on [4Fe-4S] cluster as a cofactor.

The enzyme catalyses N-formylmethanofuran + 2 oxidized [2Fe-2S]-[ferredoxin] + H2O = methanofuran + 2 reduced [2Fe-2S]-[ferredoxin] + CO2 + H(+). Its pathway is one-carbon metabolism; methanogenesis from CO(2); 5,10-methenyl-5,6,7,8-tetrahydromethanopterin from CO(2): step 1/3. With respect to regulation, not inactivated by cyanide. In terms of biological role, catalyzes the reversible oxidation of CO(2) and methanofuran (MFR) to N-formylmethanofuran (CHO-MFR). This enzyme is oxygen-labile. May function as an electron transfer protein. This chain is Tungsten-containing formylmethanofuran dehydrogenase 2 subunit G (fwdG), found in Methanopyrus kandleri (strain AV19 / DSM 6324 / JCM 9639 / NBRC 100938).